Consider the following 100-residue polypeptide: Urease subunit gamma (100 aa).

This sequence belongs to the urease gamma subunit family. As to quaternary structure, heterotrimer of UreA (gamma), UreB (beta) and UreC (alpha) subunits. Three heterotrimers associate to form the active enzyme.

The protein localises to the cytoplasm. It carries out the reaction urea + 2 H2O + H(+) = hydrogencarbonate + 2 NH4(+). It participates in nitrogen metabolism; urea degradation; CO(2) and NH(3) from urea (urease route): step 1/1. The polypeptide is Urease subunit gamma (Roseobacter denitrificans (strain ATCC 33942 / OCh 114) (Erythrobacter sp. (strain OCh 114))).